The sequence spans 228 residues: L-ribulose-5-phosphate 4-epimerase UlaF (228 aa).

Residues 26-27 (GN), 43-44 (SG), and 72-73 (SS) each bind substrate. Residues D74, H93, and H95 each contribute to the Zn(2+) site. The Proton donor/acceptor role is filled by D118. Zn(2+) is bound at residue H167. Y225 serves as the catalytic Proton donor/acceptor.

The protein belongs to the aldolase class II family. AraD/FucA subfamily. It depends on Zn(2+) as a cofactor.

It catalyses the reaction L-ribulose 5-phosphate = D-xylulose 5-phosphate. Its pathway is cofactor degradation; L-ascorbate degradation; D-xylulose 5-phosphate from L-ascorbate: step 4/4. In terms of biological role, catalyzes the isomerization of L-ribulose 5-phosphate to D-xylulose 5-phosphate. Is involved in the anaerobic L-ascorbate utilization. This is L-ribulose-5-phosphate 4-epimerase UlaF from Escherichia coli (strain SMS-3-5 / SECEC).